Consider the following 67-residue polypeptide: Ubiquinol-cytochrome c reductase complex assembly factor 6 (67 aa).

The Mitochondrial matrix segment spans residues 1–8 (MPGGVPWS). Residues 9–25 (AYLKMLSSSLLAMCAGA) form a helical; Signal-anchor for type II membrane protein membrane-spanning segment. Residues 26-67 (QVVHWYYRPDLTIPEIPPKPGELKTELLGLKERRHEPHVSQQ) lie on the Mitochondrial intermembrane side of the membrane.

The protein belongs to the UQCC6 family. In terms of assembly, interacts with UQCRC1. Interacts with UQCRQ. Interacts with UQCC5. Forms a complex, named COMB/coordinator of mitochondrial CYTB biogenesis, composed of UQCC1, UQCC2, UQCC4, UQCC5 and UQCC6; stabilizes nascent cytochrome b/MT-CYB and promotes its membrane insertion. Forms a complex, named COMA, composed of UQCC1, UQCC2 and UQCC4; activates MT-CYB translation. Forms a complex, named COMC, composed of UQCC1, UQCC2; UQCC3 and UQCC4; mediates MT-CYB hemylation and association with the first nuclear-encoded complex III subunit UQCRQ. Interacts with MT-CYB. Highly expressed in brown adipose, cardiac and skeletal muscle (at protein level).

It localises to the mitochondrion inner membrane. Required for the assembly and stability of the mitochondrial ubiquinol-cytochrome c reductase complex (complex III or cytochrome b-c1 complex), a multisubunit transmembrane complex that is part of the mitochondrial electron transport chain (ETC) which drives oxidative phosphorylation. Mediates early complex III biogenesis. Participates in regulating the levels of electron transport chain proteins, and therefore energy supply, in response to changes in energy demand. Also required for cytochrome c oxidase complex (complex IV) assembly. This chain is Ubiquinol-cytochrome c reductase complex assembly factor 6, found in Mus musculus (Mouse).